The sequence spans 505 residues: Probable glycine dehydrogenase (decarboxylating) subunit 2 (505 aa).

Position 274 is an N6-(pyridoxal phosphate)lysine (K274).

It belongs to the GcvP family. C-terminal subunit subfamily. As to quaternary structure, the glycine cleavage system is composed of four proteins: P, T, L and H. In this organism, the P 'protein' is a heterodimer of two subunits. The cofactor is pyridoxal 5'-phosphate.

The enzyme catalyses N(6)-[(R)-lipoyl]-L-lysyl-[glycine-cleavage complex H protein] + glycine + H(+) = N(6)-[(R)-S(8)-aminomethyldihydrolipoyl]-L-lysyl-[glycine-cleavage complex H protein] + CO2. Its function is as follows. The glycine cleavage system catalyzes the degradation of glycine. The P protein binds the alpha-amino group of glycine through its pyridoxal phosphate cofactor; CO(2) is released and the remaining methylamine moiety is then transferred to the lipoamide cofactor of the H protein. The sequence is that of Probable glycine dehydrogenase (decarboxylating) subunit 2 from Sulfurisphaera tokodaii (strain DSM 16993 / JCM 10545 / NBRC 100140 / 7) (Sulfolobus tokodaii).